We begin with the raw amino-acid sequence, 61 residues long: MAKKSMIAKNKRPAKHSTQAYTRCEKCGRPHSVYRKFKLCRVCFRELAYKGQIPGVVKASW.

Residues Cys24, Cys27, Cys40, and Cys43 each contribute to the Zn(2+) site.

This sequence belongs to the universal ribosomal protein uS14 family. Zinc-binding uS14 subfamily. Part of the 30S ribosomal subunit. Contacts proteins S3 and S10. Zn(2+) is required as a cofactor.

In terms of biological role, binds 16S rRNA, required for the assembly of 30S particles and may also be responsible for determining the conformation of the 16S rRNA at the A site. The sequence is that of Small ribosomal subunit protein uS14B from Streptococcus pyogenes serotype M6 (strain ATCC BAA-946 / MGAS10394).